A 378-amino-acid chain; its full sequence is Cytochrome b (378 aa).

The next 4 membrane-spanning stretches (helical) occupy residues 34–54 (FGSL…FLSM), 78–100 (WLLR…CHIG), 113–133 (TWNV…VGYV), and 179–199 (FFSF…VHLL). Heme b-binding residues include His-84 and His-98. Residues His-183 and His-197 each coordinate heme b. His-202 contacts a ubiquinone. Transmembrane regions (helical) follow at residues 225–245 (YSTK…IVVL), 289–306 (LGGV…FCLP), 313–342 (KFRS…WIGM), and 350–369 (IFIG…LNPL).

The protein belongs to the cytochrome b family. As to quaternary structure, the main subunits of complex b-c1 are: cytochrome b, cytochrome c1 and the Rieske protein. Requires heme b as cofactor.

The protein resides in the mitochondrion inner membrane. In terms of biological role, component of the ubiquinol-cytochrome c reductase complex (complex III or cytochrome b-c1 complex) that is part of the mitochondrial respiratory chain. The b-c1 complex mediates electron transfer from ubiquinol to cytochrome c. Contributes to the generation of a proton gradient across the mitochondrial membrane that is then used for ATP synthesis. This is Cytochrome b (mt:Cyt-b) from Loxocorone allax (Goblet worm).